The chain runs to 252 residues: Insulin-induced gene 1 protein (252 aa).

Over 1–59 (MPRLESGAWSCSCAARARHAARPGEAAPKADAMQSPSPSAGRAEREASGGSATTWRQHL) the chain is Cytoplasmic. A disordered region spans residues 22–48 (RPGEAAPKADAMQSPSPSAGRAEREAS). Residues 60-82 (VQRSVVLFVVGAFMALVLNLLQI) form a helical membrane-spanning segment. Residues 83-101 (QRNVTLFPDEVIATLFSSA) are Extracellular-facing. A helical membrane pass occupies residues 102-119 (WWVPPCCGTAAAVVGLLY). At 120-134 (PCIDSHLGEPHKFKR) the chain is on the cytoplasmic side. The chain crosses the membrane as a helical span at residues 135–157 (EWASVMRCIAVFVGINHASAKLD). The Extracellular portion of the chain corresponds to 158–160 (FAN). A helical transmembrane segment spans residues 161 to 179 (NVQLSLTLAALSLGLWWTF). The Cytoplasmic portion of the chain corresponds to 180–184 (DRSRS). Residues 185–206 (GLGLGITIAFVATLITQFLVYN) traverse the membrane as a helical segment. Residues 207 to 220 (GVYQYTSPDFLYIR) lie on the Extracellular side of the membrane. Residues 221–238 (SWLPCIFFSGGVTVGNIG) traverse the membrane as a helical segment. Over 239 to 252 (RQLAMGIPEKPHND) the chain is Cytoplasmic. The short motif at 246-252 (PEKPHND) is the KxHxx element.

This sequence belongs to the INSIG family. Interacts with SCAP; interaction is direct and only takes place in the presence of sterols; it prevents interaction between SCAP and the coat protein complex II (COPII). Associates with the SCAP-SREBP complex; association is mediated via its interaction with SCAP and only takes place in the presence of sterols.

It is found in the endoplasmic reticulum membrane. Its function is as follows. Oxysterol-binding protein that mediates feedback control of cholesterol synthesis by controlling both endoplasmic reticulum to Golgi transport of SCAP and degradation of HMGCR. Acts as a negative regulator of cholesterol biosynthesis by mediating the retention of the SCAP-SREBP complex in the endoplasmic reticulum, thereby blocking the processing of sterol regulatory element-binding proteins (SREBPs). Binds oxysterol, including 25-hydroxycholesterol, regulating interaction with SCAP and retention of the SCAP-SREBP complex in the endoplasmic reticulum. In presence of oxysterol, interacts with SCAP, retaining the SCAP-SREBP complex in the endoplasmic reticulum, thereby preventing SCAP from escorting SREBPs to the Golgi. Sterol deprivation reduces oxysterol-binding, disrupting the interaction between INSIG1 and SCAP, thereby promoting Golgi transport of the SCAP-SREBP complex, followed by processing and nuclear translocation of SREBPs. Also regulates cholesterol synthesis by regulating degradation of HMGCR. The protein is Insulin-induced gene 1 protein of Gallus gallus (Chicken).